A 442-amino-acid chain; its full sequence is tRNA modification GTPase MnmE (442 aa).

Arginine 23, glutamate 82, and lysine 121 together coordinate (6S)-5-formyl-5,6,7,8-tetrahydrofolate. Residues 217–363 (PFKIAIIGET…LVDLLTKYIN (147 aa)) enclose the TrmE-type G domain. Residue asparagine 227 participates in K(+) binding. Residues 227–232 (NVGKSS), 246–252 (SNIKGST), and 271–274 (DTAG) contribute to the GTP site. Serine 231 is a Mg(2+) binding site. Residues serine 246, isoleucine 248, and serine 251 each coordinate K(+). Threonine 252 provides a ligand contact to Mg(2+). Lysine 442 is a (6S)-5-formyl-5,6,7,8-tetrahydrofolate binding site.

The protein belongs to the TRAFAC class TrmE-Era-EngA-EngB-Septin-like GTPase superfamily. TrmE GTPase family. As to quaternary structure, homodimer. Heterotetramer of two MnmE and two MnmG subunits. It depends on K(+) as a cofactor.

It is found in the cytoplasm. In terms of biological role, exhibits a very high intrinsic GTPase hydrolysis rate. Involved in the addition of a carboxymethylaminomethyl (cmnm) group at the wobble position (U34) of certain tRNAs, forming tRNA-cmnm(5)s(2)U34. In Mycoplasma genitalium (strain ATCC 33530 / DSM 19775 / NCTC 10195 / G37) (Mycoplasmoides genitalium), this protein is tRNA modification GTPase MnmE.